The sequence spans 252 residues: Trans-aconitate 2-methyltransferase (252 aa).

It belongs to the methyltransferase superfamily. Tam family. Monomer.

It localises to the cytoplasm. The enzyme catalyses trans-aconitate + S-adenosyl-L-methionine = (E)-3-(methoxycarbonyl)pent-2-enedioate + S-adenosyl-L-homocysteine. Functionally, catalyzes the S-adenosylmethionine monomethyl esterification of trans-aconitate at high affinity and of cis-aconitate, isocitrate, and citrate at lower velocities and affinities. In Escherichia coli O157:H7, this protein is Trans-aconitate 2-methyltransferase (tam).